Here is a 97-residue protein sequence, read N- to C-terminus: HssA/B-like protein 48 (97 aa).

Disordered regions lie at residues 1-20 and 78-97; these read MTLF…SKSS and GSGY…CCGI.

It belongs to the hssA/B family.

The sequence is that of HssA/B-like protein 48 (hssl48) from Dictyostelium discoideum (Social amoeba).